A 3295-amino-acid polypeptide reads, in one-letter code: Toxin CdiA (3295 aa).

Residues P33–A366 are two-partner system transport domain (TPS). Residues L55–S75 form a helical membrane-spanning segment. The interval G353–N1574 is FHA-1. Positions P1165–P1185 are disordered. The receptor binding domain (RBD) stretch occupies residues R1575–P1796. The tract at residues G1797–N1977 is YP domain. The segment at N1806–T1831 is disordered. The tract at residues G1998–N2035 is periplasmic FHA-1 repeat (pFR). Positions L2022–S2676 are FHA-2. 2 disordered regions span residues T2260 to S2292 and Q2823 to E2847. Polar residues predominate over residues Q2823–G2838. The VENN CT cleavage motif motif lies at V3073–N3076. The CT domain stretch occupies residues V3073–K3295. The disordered stretch occupies residues S3276–K3295. The segment covering Q3286–K3295 has biased composition (basic and acidic residues).

It in the N-terminal section; belongs to the CdiA toxin family. As to quaternary structure, probably interacts with cognate immunity protein CdiI.

It localises to the membrane. The protein localises to the target cell. Its subcellular location is the target cell cytoplasm. Its function is as follows. Toxic component of a toxin-immunity protein module, which functions as a cellular contact-dependent growth inhibition (CDI) system. CDI modules allow bacteria to communicate with and inhibit the growth of closely related neighboring bacteria in a contact-dependent fashion. CDI is neutralized by its cognate immunity protein CdiI, but not by non-cognate CdiI from other bacteria. Functionally, the CdiA protein is thought to be exported from the cell through the central lumen of CdiB, the other half of its two-partner system (TPS). The TPS domain probably remains associated with CdiB while the FHA-1 domain forms an extended filament with the receptor-binding domain (RBD) at its extremity; in the secretion arrested state the C-terminus of the RBD and YP domains form a hairpin-like structure as the FHA-2, PT and CT domains are periplasmic. The YP domain is probably responsible for this arrest at the point where it re-enters the host cell periplasm. Upon binding to a target cell outer membrane receptor a signal is transmitted to activate secretion. The filament elongates slightly, the rest of CdiA is secreted and the FHA-2 domain becomes stably associated with the target cell's outer membrane where it facilitates entry of the toxic CT domain into the target cell periplasm. From there the toxic CT domain is cleaved and gains access to the target cell cytoplasm via an inner membrane protein. The protein is Toxin CdiA of Yersinia pestis.